Consider the following 268-residue polypeptide: Tryptophan synthase alpha chain (268 aa).

Active-site proton acceptor residues include glutamate 49 and aspartate 60.

The protein belongs to the TrpA family. As to quaternary structure, tetramer of two alpha and two beta chains.

It carries out the reaction (1S,2R)-1-C-(indol-3-yl)glycerol 3-phosphate + L-serine = D-glyceraldehyde 3-phosphate + L-tryptophan + H2O. Its pathway is amino-acid biosynthesis; L-tryptophan biosynthesis; L-tryptophan from chorismate: step 5/5. The alpha subunit is responsible for the aldol cleavage of indoleglycerol phosphate to indole and glyceraldehyde 3-phosphate. This Xylella fastidiosa (strain 9a5c) protein is Tryptophan synthase alpha chain.